Consider the following 361-residue polypeptide: Probable G-protein coupled receptor 25 (361 aa).

Residues methionine 1–tyrosine 39 lie on the Extracellular side of the membrane. A helical transmembrane segment spans residues valine 40 to valine 60. The Cytoplasmic segment spans residues valine 61 to aspartate 75. The helical transmembrane segment at threonine 76–alanine 96 threads the bilayer. At alanine 97–glycine 126 the chain is on the extracellular side. A helical membrane pass occupies residues alanine 127–alanine 147. Over arginine 148–cysteine 155 the chain is Cytoplasmic. The chain crosses the membrane as a helical span at residues alanine 156–valine 176. Topologically, residues tyrosine 177–glutamine 200 are extracellular. The chain crosses the membrane as a helical span at residues glycine 201–phenylalanine 220. Over cysteine 221 to serine 242 the chain is Cytoplasmic. Residues leucine 243 to leucine 263 form a helical membrane-spanning segment. Residues arginine 264–leucine 289 lie on the Extracellular side of the membrane. Residues threonine 290–leucine 310 form a helical membrane-spanning segment. At aspartate 311–tryptophan 361 the chain is on the cytoplasmic side.

The protein belongs to the G-protein coupled receptor 1 family.

It is found in the cell membrane. Functionally, orphan receptor. This is Probable G-protein coupled receptor 25 (GPR25) from Homo sapiens (Human).